A 216-amino-acid polypeptide reads, in one-letter code: uncharacterized protein (216 aa).

In terms of domain architecture, N-acetyltransferase spans 1–216 (MVVKIVEAYE…DVTFLKLKLK (216 aa)).

Belongs to the acetyltransferase family.

This is an uncharacterized protein from Dictyostelium discoideum (Social amoeba).